Consider the following 414-residue polypeptide: Esterase FrsA (414 aa).

It belongs to the FrsA family.

It carries out the reaction a carboxylic ester + H2O = an alcohol + a carboxylate + H(+). Its function is as follows. Catalyzes the hydrolysis of esters. The chain is Esterase FrsA from Salmonella agona (strain SL483).